Here is a 95-residue protein sequence, read N- to C-terminus: MTKSELIEKLATRQSQLSAKEVEGAIKEMLEQMATTLESGDRIEIRGFGSFSLHYRAPRTGRNPKTGSSVELEGKYVPHFKPGKELRERVDAVNV.

The protein belongs to the bacterial histone-like protein family. Heterodimer of an alpha and a beta chain.

Its function is as follows. This protein is one of the two subunits of integration host factor, a specific DNA-binding protein that functions in genetic recombination as well as in transcriptional and translational control. The polypeptide is Integration host factor subunit beta (Shewanella sp. (strain ANA-3)).